A 156-amino-acid chain; its full sequence is Ribosomal RNA large subunit methyltransferase H (156 aa).

S-adenosyl-L-methionine contacts are provided by residues Leu-73, Gly-104, and 123-128 (ISSLTL).

The protein belongs to the RNA methyltransferase RlmH family. As to quaternary structure, homodimer.

Its subcellular location is the cytoplasm. It catalyses the reaction pseudouridine(1915) in 23S rRNA + S-adenosyl-L-methionine = N(3)-methylpseudouridine(1915) in 23S rRNA + S-adenosyl-L-homocysteine + H(+). Functionally, specifically methylates the pseudouridine at position 1915 (m3Psi1915) in 23S rRNA. The protein is Ribosomal RNA large subunit methyltransferase H of Herminiimonas arsenicoxydans.